A 595-amino-acid polypeptide reads, in one-letter code: Sorting nexin-9 (595 aa).

The region spanning 1–62 is the SH3 domain; sequence MATKARVMYD…PTDYVEILPN (62 aa). Positions 89-100 are enriched in low complexity; sequence QTNSSSANSNNQ. Residues 89 to 199 form a disordered region; that stretch reads QTNSSSANSN…QRGNSRAGAS (111 aa). A Phosphoserine modification is found at S121. A compositionally biased stretch (polar residues) spans 129–144; sequence TDGTSAQRNSSANNWD. A compositionally biased stretch (acidic residues) spans 159 to 169; sequence GDDDEWDEDWD. Phosphoserine is present on S200. Residues 201 to 213 are critical for tubulation activity; sequence MKLPLNKFPGFAK. At Y239 the chain carries Phosphotyrosine. The PX domain maps to 250–360; sequence FDCVVADPRK…QQFLNFRDEK (111 aa). A 1,2-diacyl-sn-glycero-3-phospho-(1D-myo-inositol-4,5-bisphosphate) contacts are provided by R286, K288, and R327. K288 carries the N6-acetyllysine modification. One can recognise a BAR domain in the interval 392-595; the sequence is LIEIEQKCDA…RQALSRFPVM (204 aa).

It belongs to the sorting nexin family. Homodimer, and homooligomer. Heterodimer with SNX18. Interacts with ITCH. Interacts (via SH3 domain) with TNK2, WASL and ACTR3. Identified in a complex with TNK2 and clathrin heavy chains. Identified in a complex with the AP-2 complex, clathrin and DNM2. Interacts (via SH3 domain) with DNM1 and DNM2. Identified in an oligomeric complex containing DNM1 and SNX9. Interacts with FCHSD1. Interacts with ADAM9 and ADAM15 cytoplasmic tails. Phosphorylated on tyrosine residues by TNK2. Phosphorylation promotes its activity in the degradation of EGFR. Post-translationally, ubiquitinated by ITCH. In terms of tissue distribution, detected in inner ear vestibula and in the cuticular plate of cochlear hair cells (at protein level).

The protein resides in the cytoplasmic vesicle membrane. Its subcellular location is the cell membrane. It localises to the cytoplasmic vesicle. It is found in the clathrin-coated vesicle. The protein localises to the golgi apparatus. The protein resides in the trans-Golgi network. Its subcellular location is the cell projection. It localises to the ruffle. It is found in the cytoplasm. Functionally, involved in endocytosis and intracellular vesicle trafficking, both during interphase and at the end of mitosis. Required for efficient progress through mitosis and cytokinesis. Required for normal formation of the cleavage furrow at the end of mitosis. Plays a role in endocytosis via clathrin-coated pits, but also clathrin-independent, actin-dependent fluid-phase endocytosis. Plays a role in macropinocytosis. Promotes internalization of TNFR. Promotes degradation of EGFR after EGF signaling. Stimulates the GTPase activity of DNM1. Promotes DNM1 oligomerization. Promotes activation of the Arp2/3 complex by WASL, and thereby plays a role in the reorganization of the F-actin cytoskeleton. Binds to membranes enriched in phosphatidylinositol 4,5-bisphosphate and promotes membrane tubulation. Has lower affinity for membranes enriched in phosphatidylinositol 3-phosphate. In Mus musculus (Mouse), this protein is Sorting nexin-9 (Snx9).